Consider the following 211-residue polypeptide: Dof zinc finger protein 5 (211 aa).

The segment at F37–A101 is disordered. The span at I68–R80 shows a compositional bias: basic and acidic residues. The Dof-type zinc-finger motif lies at L109–P163. Residues C111, C114, C136, and C139 each coordinate Zn(2+). The tract at residues S191 to F211 is disordered.

The protein resides in the nucleus. Its function is as follows. Transcription factor that may transactivate seed storage protein genes in developing seeds. The chain is Dof zinc finger protein 5 from Oryza sativa subsp. japonica (Rice).